A 637-amino-acid chain; its full sequence is Chaperone protein HtpG (637 aa).

The segment at 1–345 is a; substrate-binding; the sequence is MSQQETHGFQ…SNDLPLNVSR (345 aa). The b stretch occupies residues 346 to 562; it reads EILQDNHITK…EGEMSTQMIK (217 aa). Residues 563–637 are c; that stretch reads LMQAAGQPVP…MNQMLLANMK (75 aa).

This sequence belongs to the heat shock protein 90 family. In terms of assembly, homodimer.

The protein resides in the cytoplasm. Its function is as follows. Molecular chaperone. Has ATPase activity. This is Chaperone protein HtpG from Shewanella sp. (strain W3-18-1).